The primary structure comprises 806 residues: Leucine--tRNA ligase (806 aa).

The 'HIGH' region signature appears at 38–48; it reads PYPSGEIHMGH. Residues 572–576 carry the 'KMSKS' region motif; the sequence is KMSKS. Lys-575 contributes to the ATP binding site.

It belongs to the class-I aminoacyl-tRNA synthetase family.

The protein localises to the cytoplasm. The enzyme catalyses tRNA(Leu) + L-leucine + ATP = L-leucyl-tRNA(Leu) + AMP + diphosphate. This chain is Leucine--tRNA ligase, found in Helicobacter acinonychis (strain Sheeba).